The primary structure comprises 876 residues: MKKMKASEIRQKYLDFFVEKGHMIEPSAPLVPIDDDSLLWINSGVATLKKYFDGRETPKKPRIVNSQKAIRTNDIENVGFTARHHTFFEMLGNFSIGDYFKHEAIEFAWEFLTSDKWMGMEPEKLYVTIHPEDTEAFRIWHEDIGLEESRIIRIEGNFWDIGEGPSGPNTEIFYDRGSAYGKDDPAEEMYPGGENERYLEVWNLVFSEFNHNKDNTYTPLPNKNIDTGMGLERMTSISQNVRTNYETDLFMPIIKEVEHVSGKKYLIDDAQDVAFKVIADHIRTISFAIADGALPANEGRGYVLRRLLRRAVRFSQSLGINEPFMYKLVDIVADIMEPYYPNVKDKSNFIKRVIKSEEERFHETLEEGLTILNELIKEAKNSDQVIKGHDAFKLYDTYGFPIELTEELATQENLSVDMPTFEQEMQQQRDRARQARQNSQSMQVQSEVLKNIQDESQFVGYETTDYQSLITHIIYNGEEVKHVEAGETIYFILRETPFYAVSGGQVADKGTVGNESFEINVTDVTKAPNGQNLHKGIVQFGEATQNAKVEARVNKEDRRLIQKNHSATHLLHAALKEVLGDHVNQAGSLVEPERLRFDFSHFGPMTQEEINLVERRVNEEIWRAIDVRIQEMSIEEAKSIGAMALFGEKYGDIVRVVNMAPFSIELCGGIHVNNTAEIGLFKIVSESGTGAGVRRIEALTGKGAFLHLEEIETQFNNIKNHLKVKSDNQVVEKVKQLQEEEKGLLKQLEQRNKEITSLKMGNIEEQVELINNLKVLATEVEIPNPKAIRSTMDDFKSKLQDTIIVLVGQVDGKVSVIATVPKSLTNQVKAGDLIKNMTPIIGGKGGGRPDMAQGGGTQPEKITEALRFIKDYIKNL.

Positions 565, 569, 667, and 671 each coordinate Zn(2+).

It belongs to the class-II aminoacyl-tRNA synthetase family. Zn(2+) serves as cofactor.

The protein localises to the cytoplasm. It catalyses the reaction tRNA(Ala) + L-alanine + ATP = L-alanyl-tRNA(Ala) + AMP + diphosphate. In terms of biological role, catalyzes the attachment of alanine to tRNA(Ala) in a two-step reaction: alanine is first activated by ATP to form Ala-AMP and then transferred to the acceptor end of tRNA(Ala). Also edits incorrectly charged Ser-tRNA(Ala) and Gly-tRNA(Ala) via its editing domain. The polypeptide is Alanine--tRNA ligase (Staphylococcus epidermidis (strain ATCC 35984 / DSM 28319 / BCRC 17069 / CCUG 31568 / BM 3577 / RP62A)).